The chain runs to 379 residues: Pre-mRNA-processing protein 45 (379 aa).

Residues 1 to 10 (MFSNRLPPPK) are compositionally biased toward pro residues. Disordered stretches follow at residues 1-22 (MFSN…ALSS) and 353-379 (SEGA…NYGA). Residues 368 to 379 (AESDDKSDNYGA) show a composition bias toward basic and acidic residues.

It belongs to the SNW family. As to quaternary structure, belongs to the CWC complex (or CEF1-associated complex), a spliceosome sub-complex reminiscent of a late-stage spliceosome composed of the U2, U5 and U6 snRNAs and at least BUD13, BUD31, BRR2, CDC40, CEF1, CLF1, CUS1, CWC2, CWC15, CWC21, CWC22, CWC23, CWC24, CWC25, CWC27, ECM2, HSH155, IST3, ISY1, LEA1, MSL1, NTC20, PRP8, PRP9, PRP11, PRP19, PRP21, PRP22, PRP45, PRP46, SLU7, SMB1, SMD1, SMD2, SMD3, SMX2, SMX3, SNT309, SNU114, SPP2, SYF1, SYF2, RSE1 and YJU2. Interacts with CLF1, PRP22 and PRP46. Interacts with SPP382.

The protein localises to the nucleus. In terms of biological role, involved in pre-mRNA splicing. Associated with the spliceosome throughout the splicing reactions, until after the second catalytic step. This Saccharomyces cerevisiae (strain ATCC 204508 / S288c) (Baker's yeast) protein is Pre-mRNA-processing protein 45 (PRP45).